The sequence spans 110 residues: MTKADIVENVYQKIGFSKKEASELVELVFDTLKTVLQDGEKVKISGFGNFVVRGKNERIGRNPQTGEQIKISARRVLTFRPSQVLKAMLNGEEYAHLKDEDDDDDYDDNE.

The protein belongs to the bacterial histone-like protein family. As to quaternary structure, heterodimer of an alpha and a beta chain.

This protein is one of the two subunits of integration host factor, a specific DNA-binding protein that functions in genetic recombination as well as in transcriptional and translational control. This is Integration host factor subunit alpha from Bdellovibrio bacteriovorus (strain ATCC 15356 / DSM 50701 / NCIMB 9529 / HD100).